The sequence spans 376 residues: Cytoplasmic tRNA 2-thiolation protein 2 (376 aa).

The protein belongs to the CTU2/NCS2 family.

It localises to the cytoplasm. It participates in tRNA modification; 5-methoxycarbonylmethyl-2-thiouridine-tRNA biosynthesis. Its function is as follows. Plays a central role in 2-thiolation of mcm(5)S(2)U at tRNA wobble positions of tRNA(Lys), tRNA(Glu) and tRNA(Gln). May act by forming a heterodimer with NCS6 that ligates sulfur from thiocarboxylated URM1 onto the uridine of tRNAs at wobble position. Prior mcm(5) tRNA modification by the elongator complex is required for 2-thiolation. May also be involved in protein urmylation. The polypeptide is Cytoplasmic tRNA 2-thiolation protein 2 (Coccidioides immitis (strain RS) (Valley fever fungus)).